Here is an 85-residue protein sequence, read N- to C-terminus: MSSGGLLLLLGLLTLCAELIPVSSRQRHRDCDKPPDKGNCGPVRRAFYYDTRLKTCKAFQYRGCNGNGNHFKTETLCRCECLVYP.

Positions 1 to 24 (MSSGGLLLLLGLLTLCAELIPVSS) are cleaved as a signal peptide. A BPTI/Kunitz inhibitor domain is found at 31–81 (CDKPPDKGNCGPVRRAFYYDTRLKTCKAFQYRGCNGNGNHFKTETLCRCEC). 3 disulfide bridges follow: Cys-31/Cys-81, Cys-40/Cys-64, and Cys-56/Cys-77.

The protein belongs to the venom Kunitz-type family. As to quaternary structure, heterodimer; disulfide-linked. The A chains have phospholipase A2 activity and the B chains show homology with the basic protease inhibitors. As to expression, expressed by the venom gland.

The protein resides in the secreted. Functionally, beta-1-bungarotoxin is a presynaptic neurotoxin of the venom. The B chain is homologous to venom basic protease inhibitors but has no protease inhibitor activity and blocks voltage-gated potassium channels (Kv). In Bungarus multicinctus (Many-banded krait), this protein is Kunitz-type serine protease inhibitor homolog beta-bungarotoxin B1 chain, major component.